Consider the following 236-residue polypeptide: Eukaryotic translation initiation factor 3 subunit J (236 aa).

A disordered region spans residues 20-88 (ANNINKWEGE…AEEEKRLANL (69 aa)). Acidic residues predominate over residues 28–46 (GEDDDEDVKESWEDEEEKK). 2 stretches are compositionally biased toward basic and acidic residues: residues 47–58 (DEEKPTKTEVPV) and 68–88 (AKLEEEERLREAEEEKRLANL).

The protein belongs to the eIF-3 subunit J family. Component of the eukaryotic translation initiation factor 3 (eIF-3) complex. The eIF-3 complex interacts with pix.

It is found in the cytoplasm. In terms of biological role, component of the eukaryotic translation initiation factor 3 (eIF-3) complex, which is involved in protein synthesis of a specialized repertoire of mRNAs and, together with other initiation factors, stimulates binding of mRNA and methionyl-tRNAi to the 40S ribosome. The eIF-3 complex specifically targets and initiates translation of a subset of mRNAs involved in cell proliferation. This chain is Eukaryotic translation initiation factor 3 subunit J, found in Drosophila willistoni (Fruit fly).